Reading from the N-terminus, the 116-residue chain is Acyl-CoA-binding protein homolog 3 (116 aa).

In terms of domain architecture, ACB spans 3–92 (LQEKFDAAVE…LNDMFDKIAE (90 aa)). Residues 34–38 (YSLFK), Lys-60, and Tyr-79 each bind an acyl-CoA.

Belongs to the ACBP family.

Binds medium- and long-chain acyl-CoA esters with very high affinity and may function as an intracellular carrier of acyl-CoA esters. The protein is Acyl-CoA-binding protein homolog 3 (acbp-3) of Caenorhabditis elegans.